A 137-amino-acid polypeptide reads, in one-letter code: MLLPKRTKYRKPHKVSFKGKAKGAKTINFGEYGLMSLDGAWIDNRQIEAARIAMTRYMRRDGKVWMRIFPHISMSKKPAEVRMGSGKGNPEKWVAVVKEGTVMFEIAGVSEETAREALRLAMHKLPVRCKFVKRGEE.

Belongs to the universal ribosomal protein uL16 family. Part of the 50S ribosomal subunit.

Binds 23S rRNA and is also seen to make contacts with the A and possibly P site tRNAs. This chain is Large ribosomal subunit protein uL16, found in Mesoplasma florum (strain ATCC 33453 / NBRC 100688 / NCTC 11704 / L1) (Acholeplasma florum).